The sequence spans 50 residues: Protein PsbN (50 aa).

The helical transmembrane segment at 14-34 (VAVTILAVLLALTGFGLWTAF) threads the bilayer.

This sequence belongs to the PsbN family.

The protein localises to the cellular thylakoid membrane. May play a role in photosystem I and II biogenesis. The protein is Protein PsbN of Prochlorococcus marinus subsp. pastoris (strain CCMP1986 / NIES-2087 / MED4).